Here is a 433-residue protein sequence, read N- to C-terminus: Bifunctional protein GlmU (433 aa).

The interval 1 to 226 (MLSVIILAAG…EECFLGVNSQ (226 aa)) is pyrophosphorylase. Residues 7–10 (LAAG), lysine 21, and 80–81 (GT) contribute to the UDP-N-acetyl-alpha-D-glucosamine site. Aspartate 106 lines the Mg(2+) pocket. Residues glycine 138, glutamate 152, asparagine 167, and asparagine 224 each contribute to the UDP-N-acetyl-alpha-D-glucosamine site. Asparagine 224 is a binding site for Mg(2+). Residues 227-247 (TERAKAEEIMLERLRKNAMDL) form a linker region. Residues 248–433 (GVVMQLPSSI…NGYFKFFKKP (186 aa)) are N-acetyltransferase. Residues arginine 311 and lysine 328 each coordinate UDP-N-acetyl-alpha-D-glucosamine. Histidine 339 functions as the Proton acceptor in the catalytic mechanism. UDP-N-acetyl-alpha-D-glucosamine-binding residues include tyrosine 342 and asparagine 353. Acetyl-CoA-binding positions include alanine 356, 362–363 (NY), serine 381, serine 399, and arginine 416.

It in the N-terminal section; belongs to the N-acetylglucosamine-1-phosphate uridyltransferase family. In the C-terminal section; belongs to the transferase hexapeptide repeat family. Homotrimer. Mg(2+) is required as a cofactor.

It localises to the cytoplasm. It carries out the reaction alpha-D-glucosamine 1-phosphate + acetyl-CoA = N-acetyl-alpha-D-glucosamine 1-phosphate + CoA + H(+). The catalysed reaction is N-acetyl-alpha-D-glucosamine 1-phosphate + UTP + H(+) = UDP-N-acetyl-alpha-D-glucosamine + diphosphate. The protein operates within nucleotide-sugar biosynthesis; UDP-N-acetyl-alpha-D-glucosamine biosynthesis; N-acetyl-alpha-D-glucosamine 1-phosphate from alpha-D-glucosamine 6-phosphate (route II): step 2/2. It functions in the pathway nucleotide-sugar biosynthesis; UDP-N-acetyl-alpha-D-glucosamine biosynthesis; UDP-N-acetyl-alpha-D-glucosamine from N-acetyl-alpha-D-glucosamine 1-phosphate: step 1/1. It participates in bacterial outer membrane biogenesis; LPS lipid A biosynthesis. Catalyzes the last two sequential reactions in the de novo biosynthetic pathway for UDP-N-acetylglucosamine (UDP-GlcNAc). The C-terminal domain catalyzes the transfer of acetyl group from acetyl coenzyme A to glucosamine-1-phosphate (GlcN-1-P) to produce N-acetylglucosamine-1-phosphate (GlcNAc-1-P), which is converted into UDP-GlcNAc by the transfer of uridine 5-monophosphate (from uridine 5-triphosphate), a reaction catalyzed by the N-terminal domain. This is Bifunctional protein GlmU from Helicobacter pylori (strain HPAG1).